Consider the following 126-residue polypeptide: MKFDVCVPILGFENVKEVTLEKIDDAFMRMESSNDEHISFTLINPFALREYDFEIPDATQKLLEIDEKSNILILNIAIIQTPVEDTVVNFIGPMIFNTDNNKAAQLVLSESTKYGVAEKISLYLKK.

Belongs to the FliW family. As to quaternary structure, interacts with translational regulator CsrA and flagellin(s).

Its subcellular location is the cytoplasm. Acts as an anti-CsrA protein, binds CsrA and prevents it from repressing translation of its target genes, one of which is flagellin. Binds to flagellin and participates in the assembly of the flagellum. In Sulfurimonas denitrificans (strain ATCC 33889 / DSM 1251) (Thiomicrospira denitrificans (strain ATCC 33889 / DSM 1251)), this protein is Flagellar assembly factor FliW.